A 283-amino-acid chain; its full sequence is Polyamine aminopropyltransferase (283 aa).

One can recognise a PABS domain in the interval 2–237; that stretch reads ELWYTEEHTD…GHWLFGFASK (236 aa). Position 31 (Q31) interacts with S-methyl-5'-thioadenosine. Spermidine contacts are provided by H62 and D86. S-methyl-5'-thioadenosine is bound by residues E106 and 137-138; that span reads DG. Residue D155 is the Proton acceptor of the active site. 155–158 contacts spermidine; that stretch reads DSTD. P162 provides a ligand contact to S-methyl-5'-thioadenosine.

Belongs to the spermidine/spermine synthase family. As to quaternary structure, homodimer or homotetramer.

Its subcellular location is the cytoplasm. The enzyme catalyses S-adenosyl 3-(methylsulfanyl)propylamine + putrescine = S-methyl-5'-thioadenosine + spermidine + H(+). It functions in the pathway amine and polyamine biosynthesis; spermidine biosynthesis; spermidine from putrescine: step 1/1. In terms of biological role, catalyzes the irreversible transfer of a propylamine group from the amino donor S-adenosylmethioninamine (decarboxy-AdoMet) to putrescine (1,4-diaminobutane) to yield spermidine. The polypeptide is Polyamine aminopropyltransferase (Clostridium perfringens (strain SM101 / Type A)).